The primary structure comprises 360 residues: UDP-N-acetylglucosamine--N-acetylmuramyl-(pentapeptide) pyrophosphoryl-undecaprenol N-acetylglucosamine transferase (360 aa).

UDP-N-acetyl-alpha-D-glucosamine-binding positions include 13 to 15 (TGG), N125, R164, S191, and Q290.

The protein belongs to the glycosyltransferase 28 family. MurG subfamily.

The protein resides in the cell inner membrane. The enzyme catalyses di-trans,octa-cis-undecaprenyl diphospho-N-acetyl-alpha-D-muramoyl-L-alanyl-D-glutamyl-meso-2,6-diaminopimeloyl-D-alanyl-D-alanine + UDP-N-acetyl-alpha-D-glucosamine = di-trans,octa-cis-undecaprenyl diphospho-[N-acetyl-alpha-D-glucosaminyl-(1-&gt;4)]-N-acetyl-alpha-D-muramoyl-L-alanyl-D-glutamyl-meso-2,6-diaminopimeloyl-D-alanyl-D-alanine + UDP + H(+). The protein operates within cell wall biogenesis; peptidoglycan biosynthesis. Its function is as follows. Cell wall formation. Catalyzes the transfer of a GlcNAc subunit on undecaprenyl-pyrophosphoryl-MurNAc-pentapeptide (lipid intermediate I) to form undecaprenyl-pyrophosphoryl-MurNAc-(pentapeptide)GlcNAc (lipid intermediate II). This chain is UDP-N-acetylglucosamine--N-acetylmuramyl-(pentapeptide) pyrophosphoryl-undecaprenol N-acetylglucosamine transferase, found in Hahella chejuensis (strain KCTC 2396).